The sequence spans 252 residues: Hsp70-Hsp90 organising protein (252 aa).

TPR repeat units lie at residues 7–40, 41–74, and 75–108; these read AQRLKELGNKCFQEGKYEEAVKYFSDAITNDPLD, HVLYSNLSGAFASLGRFYEALESANKCISIKKDW, and PKGYIRKGCAEHGLRQLSNAEKTYLEGLKIDPNN. Residues 197–239 are a coiled coil; that stretch reads EGNDAEERQRQQREEEERRKKKEEEERKKKEEEEMKKQNRTPE. A disordered region spans residues 199-252; sequence NDAEERQRQQREEEERRKKKEEEERKKKEEEEMKKQNRTPEQIQGDEHKLKVMN. Composition is skewed to basic and acidic residues over residues 201-233 and 243-252; these read AEERQRQQREEEERRKKKEEEERKKKEEEEMKK and GDEHKLKVMN.

Monomer. Homodimer. Forms a complex composed of HOP and chaperones HSP70 and HSP90; the interaction is stronger in the absence of ATP. Interacts (via TPR 1, 2, 3, 7, 8 and 9 repeats) with HSP70 (via C-terminus); the interaction is direct and is stronger in the absence of ATP. Interacts (via TPR 4, 5 and 6 repeats) with HSP90 (via C-terminus); the interaction is direct.

It is found in the cytoplasm. In terms of biological role, acts as a co-chaperone and mediates the association of the chaperones HSP70 and HSP90 probably facilitating substrate transfer from HSP70 to HSP90. Stimulates HSP70 ATPase activity and, in contrast, inhibits HSP90 ATPase activity. The chain is Hsp70-Hsp90 organising protein from Plasmodium falciparum.